Reading from the N-terminus, the 298-residue chain is GTPase Era (298 aa).

The Era-type G domain maps to 8-176 (RSGSVAVIGR…VSDLLKLVPE (169 aa)). The G1 stretch occupies residues 16-23 (GRPNVGKS). 16–23 (GRPNVGKS) is a binding site for GTP. Residues 42–46 (QTTRH) form a G2 region. The tract at residues 63-66 (DTPG) is G3. Residues 63–67 (DTPGL) and 125–128 (NKVD) each bind GTP. Positions 125–128 (NKVD) are G4. The segment at 155-157 (VSA) is G5. Residues 199–283 (VREQLMRQLG…FLETWVRVRE (85 aa)) form the KH type-2 domain.

Belongs to the TRAFAC class TrmE-Era-EngA-EngB-Septin-like GTPase superfamily. Era GTPase family. As to quaternary structure, monomer.

Its subcellular location is the cytoplasm. It localises to the cell inner membrane. Functionally, an essential GTPase that binds both GDP and GTP, with rapid nucleotide exchange. Plays a role in 16S rRNA processing and 30S ribosomal subunit biogenesis and possibly also in cell cycle regulation and energy metabolism. In Xanthomonas campestris pv. campestris (strain 8004), this protein is GTPase Era.